The primary structure comprises 287 residues: DDRGK domain-containing protein 1 (287 aa).

Residues 1–5 (MDLIL) lie on the Lumenal side of the membrane. A helical membrane pass occupies residues 6 to 26 (LLGIAVALLVILVTLFFFTKG). Topologically, residues 27–287 (KGSQESGKYN…LINLVPVSAE (261 aa)) are cytoplasmic. Disordered regions lie at residues 28–102 (GSQE…KRAK) and 135–164 (KVEA…RQEH). Residues 44 to 68 (AQAAPRRAQVVRNQRNRARVAAAPA) show a composition bias toward low complexity. Over residues 85–102 (IPHADFNGEKMGAKKRAK) the composition is skewed to basic and acidic residues.

Belongs to the DDRGK1 family. In terms of assembly, interacts with Atg9; the interaction is transient.

It is found in the endoplasmic reticulum membrane. Functionally, substrate adapter for ufmylation, the covalent attachment of the ubiquitin-like modifier UFM1 to substrate proteins. Required for ufmylation of Atg9; protects the nervous system during aging, possibly by stabilizing Atg9 and supporting its function. The chain is DDRGK domain-containing protein 1 from Culex quinquefasciatus (Southern house mosquito).